A 288-amino-acid chain; its full sequence is HTH-type transcriptional regulator CzcR (288 aa).

One can recognise an HTH lysR-type domain in the interval 1 to 58 (MELRDLQIFQSVADQGSVSSAAKELNYVQSNVTARIKQLENELKTPLFYRHKRGMTLT). Residues 18-37 (VSSAAKELNYVQSNVTARIK) constitute a DNA-binding region (H-T-H motif).

The protein belongs to the LysR transcriptional regulatory family.

This chain is HTH-type transcriptional regulator CzcR (czcR), found in Bacillus anthracis.